Here is a 165-residue protein sequence, read N- to C-terminus: Putative 4-hydroxy-4-methyl-2-oxoglutarate aldolase (165 aa).

Substrate-binding positions include 80–83 and Arg-102; that span reads GGNL. Asp-103 is an a divalent metal cation binding site.

The protein belongs to the class II aldolase/RraA-like family. As to quaternary structure, homotrimer. The cofactor is a divalent metal cation.

The enzyme catalyses 4-hydroxy-4-methyl-2-oxoglutarate = 2 pyruvate. The catalysed reaction is oxaloacetate + H(+) = pyruvate + CO2. Catalyzes the aldol cleavage of 4-hydroxy-4-methyl-2-oxoglutarate (HMG) into 2 molecules of pyruvate. Also contains a secondary oxaloacetate (OAA) decarboxylase activity due to the common pyruvate enolate transition state formed following C-C bond cleavage in the retro-aldol and decarboxylation reactions. The protein is Putative 4-hydroxy-4-methyl-2-oxoglutarate aldolase of Burkholderia mallei (strain NCTC 10247).